The chain runs to 60 residues: Protein CADMIUM TOLERANCE 4 (60 aa).

Residues 26–42 (GFLYACLFMLCCCFCCY) traverse the membrane as a helical segment.

Belongs to the CYSTM1 family. As to expression, mainly expressed in shoots, and, to a lower extent, in roots.

It localises to the cell membrane. Its subcellular location is the secreted. It is found in the cell wall. Functionally, confers resistance to heavy metal ions (e.g. aluminium (Al)) by chelating them at the plasma membrane of root cells, thus stopping their entry and reducing their accumulation. The protein is Protein CADMIUM TOLERANCE 4 of Oryza sativa subsp. japonica (Rice).